We begin with the raw amino-acid sequence, 317 residues long: Melanocyte-stimulating hormone receptor (317 aa).

At 1-37 (MPVLGSQRRLLGSLNCTPPATFPLMLAPNRTGPQCLE) the chain is on the extracellular side. N-linked (GlcNAc...) asparagine glycosylation is present at Asn-29. Residues 38–63 (VSIPNGLFLSLGLVSLVENVLVVAAI) form a helical membrane-spanning segment. The Cytoplasmic portion of the chain corresponds to 64–72 (AKNSNLHSP). A helical transmembrane segment spans residues 73-93 (MYYFICCLAVSDLLVSVSNVL). Residues 94-118 (ETAVMLLLEAGALAARAAVVQQLDN) are Extracellular-facing. A helical transmembrane segment spans residues 119–140 (VIDVLICGSMVSSLCFLGAIAV). Residues 141-163 (DRYISIFYALRYHSVVTLPRAWR) are Cytoplasmic-facing. A helical membrane pass occupies residues 164–183 (IIAAIWVASILTSLLFITYY). Topologically, residues 184 to 191 (NHTVVLLC) are extracellular. Residues 192-211 (LVGFFIAMLALMAVLYVHML) form a helical membrane-spanning segment. The Cytoplasmic portion of the chain corresponds to 212–240 (ARACQHARGIARLQKRQRPIHRGFGLKGA). Residues 241–266 (ATLTILLGVFFLCWGPFFLHLSLIVL) form a helical membrane-spanning segment. Residues 267-279 (CPQHPTCGCIFKN) lie on the Extracellular side of the membrane. Residues 280–300 (FNLFLALIICNAIVDPLIYAF) form a helical membrane-spanning segment. Residues 301 to 317 (RSQELRKTLQEVLQCSW) are Cytoplasmic-facing. Cys-315 carries S-palmitoyl cysteine lipidation.

It belongs to the G-protein coupled receptor 1 family. In terms of assembly, interacts with MGRN1, but does not undergo MGRN1-mediated ubiquitination; this interaction competes with GNAS-binding and thus inhibits agonist-induced cAMP production. Interacts with OPN3; the interaction results in a decrease in MC1R-mediated cAMP signaling and ultimately a decrease in melanin production in melanocytes.

The protein resides in the cell membrane. Its function is as follows. Receptor for MSH (alpha, beta and gamma) and ACTH. The activity of this receptor is mediated by G proteins which activate adenylate cyclase. Mediates melanogenesis, the production of eumelanin (black/brown) and phaeomelanin (red/yellow), via regulation of cAMP signaling in melanocytes. The sequence is that of Melanocyte-stimulating hormone receptor (MC1R) from Rangifer tarandus (Reindeer).